The primary structure comprises 412 residues: Flap endonuclease 1-B (412 aa).

The N-domain stretch occupies residues 1–105 (MGIKGLTKLL…KELAKRSLKR (105 aa)). Residue D34 participates in Mg(2+) binding. R71 contacts DNA. Mg(2+) is bound by residues D87, E159, E161, D180, and D182. The segment at 123-254 (LIEKFSKRTV…QRALKLIRQH (132 aa)) is I-domain. E159 serves as a coordination point for DNA. G232 and D234 together coordinate DNA. D234 serves as a coordination point for Mg(2+).

Belongs to the XPG/RAD2 endonuclease family. FEN1 subfamily. As to quaternary structure, interacts with PCNA. Three molecules of FEN1 bind to one PCNA trimer with each molecule binding to one PCNA monomer. PCNA stimulates the nuclease activity without altering cleavage specificity. Mg(2+) is required as a cofactor. In terms of processing, phosphorylated. Phosphorylation upon DNA damage induces relocalization to the nuclear plasma.

The protein localises to the nucleus. It is found in the nucleolus. Its subcellular location is the nucleoplasm. The protein resides in the mitochondrion. Functionally, structure-specific nuclease with 5'-flap endonuclease and 5'-3' exonuclease activities involved in DNA replication and repair. During DNA replication, cleaves the 5'-overhanging flap structure that is generated by displacement synthesis when DNA polymerase encounters the 5'-end of a downstream Okazaki fragment. It enters the flap from the 5'-end and then tracks to cleave the flap base, leaving a nick for ligation. Also involved in the long patch base excision repair (LP-BER) pathway, by cleaving within the apurinic/apyrimidinic (AP) site-terminated flap. Acts as a genome stabilization factor that prevents flaps from equilibrating into structures that lead to duplications and deletions. Also possesses 5'-3' exonuclease activity on nicked or gapped double-stranded DNA, and exhibits RNase H activity. Also involved in replication and repair of rDNA and in repairing mitochondrial DNA. This is Flap endonuclease 1-B from Oryza sativa subsp. indica (Rice).